Reading from the N-terminus, the 710-residue chain is Polyribonucleotide nucleotidyltransferase (710 aa).

Residues D491 and D497 each coordinate Mg(2+). A KH domain is found at 558-618; it reads PRIYKIQVKP…SAAQKAIEII (61 aa). An S1 motif domain is found at 628–696; that stretch reads GRIYMGKVTR…ELGRVRLSRK (69 aa).

The protein belongs to the polyribonucleotide nucleotidyltransferase family. Requires Mg(2+) as cofactor.

It localises to the cytoplasm. The catalysed reaction is RNA(n+1) + phosphate = RNA(n) + a ribonucleoside 5'-diphosphate. Its function is as follows. Involved in mRNA degradation. Catalyzes the phosphorolysis of single-stranded polyribonucleotides processively in the 3'- to 5'-direction. The sequence is that of Polyribonucleotide nucleotidyltransferase from Thermodesulfovibrio yellowstonii (strain ATCC 51303 / DSM 11347 / YP87).